Here is a 333-residue protein sequence, read N- to C-terminus: Holliday junction branch migration complex subunit RuvB (333 aa).

The large ATPase domain (RuvB-L) stretch occupies residues 1–182; the sequence is MEERLVSGDV…FGVISRLEYY (182 aa). ATP-binding positions include Leu21, Arg22, Gly63, Lys66, Thr67, Thr68, 129 to 131, Arg172, Tyr182, and Arg219; that span reads EDY. Thr67 is a binding site for Mg(2+). The interval 183 to 253 is small ATPAse domain (RuvB-S); that stretch reads TTEHLTQIVM…LAKEALELLQ (71 aa). The interval 256 to 333 is head domain (RuvB-H); the sequence is RLGLDHIDHK…EHFGMEVPKQ (78 aa). DNA contacts are provided by Arg311 and Arg316.

Belongs to the RuvB family. As to quaternary structure, homohexamer. Forms an RuvA(8)-RuvB(12)-Holliday junction (HJ) complex. HJ DNA is sandwiched between 2 RuvA tetramers; dsDNA enters through RuvA and exits via RuvB. An RuvB hexamer assembles on each DNA strand where it exits the tetramer. Each RuvB hexamer is contacted by two RuvA subunits (via domain III) on 2 adjacent RuvB subunits; this complex drives branch migration. In the full resolvosome a probable DNA-RuvA(4)-RuvB(12)-RuvC(2) complex forms which resolves the HJ.

Its subcellular location is the cytoplasm. It catalyses the reaction ATP + H2O = ADP + phosphate + H(+). Its function is as follows. The RuvA-RuvB-RuvC complex processes Holliday junction (HJ) DNA during genetic recombination and DNA repair, while the RuvA-RuvB complex plays an important role in the rescue of blocked DNA replication forks via replication fork reversal (RFR). RuvA specifically binds to HJ cruciform DNA, conferring on it an open structure. The RuvB hexamer acts as an ATP-dependent pump, pulling dsDNA into and through the RuvAB complex. RuvB forms 2 homohexamers on either side of HJ DNA bound by 1 or 2 RuvA tetramers; 4 subunits per hexamer contact DNA at a time. Coordinated motions by a converter formed by DNA-disengaged RuvB subunits stimulates ATP hydrolysis and nucleotide exchange. Immobilization of the converter enables RuvB to convert the ATP-contained energy into a lever motion, pulling 2 nucleotides of DNA out of the RuvA tetramer per ATP hydrolyzed, thus driving DNA branch migration. The RuvB motors rotate together with the DNA substrate, which together with the progressing nucleotide cycle form the mechanistic basis for DNA recombination by continuous HJ branch migration. Branch migration allows RuvC to scan DNA until it finds its consensus sequence, where it cleaves and resolves cruciform DNA. This Geobacillus sp. (strain WCH70) protein is Holliday junction branch migration complex subunit RuvB.